The chain runs to 301 residues: N-acetylmuramic acid 6-phosphate etherase (301 aa).

Residues 59–222 form the SIS domain; sequence TSEALMHGGR…STSVMVKLGK (164 aa). Catalysis depends on Glu87, which acts as the Proton donor. Glu118 is a catalytic residue.

The protein belongs to the GCKR-like family. MurNAc-6-P etherase subfamily. As to quaternary structure, homodimer.

It carries out the reaction N-acetyl-D-muramate 6-phosphate + H2O = N-acetyl-D-glucosamine 6-phosphate + (R)-lactate. It functions in the pathway amino-sugar metabolism; N-acetylmuramate degradation. Its function is as follows. Specifically catalyzes the cleavage of the D-lactyl ether substituent of MurNAc 6-phosphate, producing GlcNAc 6-phosphate and D-lactate. The polypeptide is N-acetylmuramic acid 6-phosphate etherase (Picosynechococcus sp. (strain ATCC 27264 / PCC 7002 / PR-6) (Agmenellum quadruplicatum)).